A 302-amino-acid polypeptide reads, in one-letter code: MPIIIPENLPASNTLTGENIFVMHEARALSQDIRPLKILILNLMPQKIQTETQLLRLLGNTPLQVDVRLLHIESHESKNTSKEHLLRFYETFDDVKDEKFDGMIITGAPVETLEYEEVDYWEELKRIMEFSVTNVTSTLHICWGAQAGLYYHYGIPKHRLKKKMFGVFKHTLNKDGVKLLRGFDNEFYVPHSRHTEVLREDILKIPELKILSESEESGLYIVATKEAKQIFVMGHSEYDPGSLKWEYDRDSAKGMDIDVPKNYYPNDDPTKEPIVRWRSHANLLFSNWLNYYVYQETPYEHK.

Cysteine 142 (acyl-thioester intermediate) is an active-site residue. Positions 163 and 192 each coordinate substrate. Histidine 235 (proton acceptor) is an active-site residue. Glutamate 237 is a catalytic residue. Arginine 249 is a substrate binding site.

The protein belongs to the MetA family.

The protein resides in the cytoplasm. It catalyses the reaction L-homoserine + acetyl-CoA = O-acetyl-L-homoserine + CoA. The protein operates within amino-acid biosynthesis; L-methionine biosynthesis via de novo pathway; O-acetyl-L-homoserine from L-homoserine: step 1/1. Its function is as follows. Transfers an acetyl group from acetyl-CoA to L-homoserine, forming acetyl-L-homoserine. The sequence is that of Homoserine O-acetyltransferase from Clostridium novyi (strain NT).